A 434-amino-acid chain; its full sequence is Chaperone SurA (434 aa).

An N-terminal signal peptide occupies residues 1–22 (MKHSKKIIFALLALAMSNTSMA). PpiC domains follow at residues 173-274 (DVEF…KVVD) and 283-383 (VEEV…QLES).

It is found in the periplasm. It catalyses the reaction [protein]-peptidylproline (omega=180) = [protein]-peptidylproline (omega=0). Chaperone involved in the correct folding and assembly of outer membrane proteins. Recognizes specific patterns of aromatic residues and the orientation of their side chains, which are found more frequently in integral outer membrane proteins. May act in both early periplasmic and late outer membrane-associated steps of protein maturation. The polypeptide is Chaperone SurA (Shewanella frigidimarina (strain NCIMB 400)).